We begin with the raw amino-acid sequence, 141 residues long: Large ribosomal subunit protein uL16c (141 aa).

The protein belongs to the universal ribosomal protein uL16 family. Part of the 50S ribosomal subunit.

The protein resides in the plastid. Its subcellular location is the chloroplast. The polypeptide is Large ribosomal subunit protein uL16c (Zygnema circumcarinatum (Green alga)).